The following is a 714-amino-acid chain: Polyribonucleotide nucleotidyltransferase (714 aa).

Mg(2+) is bound by residues Asp488 and Asp494. A KH domain is found at 555–614 (PRIEVMNIPTDKIRDVIGSGGKVIREIVEKTGAKINIEDDGTVKIASSNGKEIEAAKKWI). The 69-residue stretch at 624-692 (GEIYEGTVVK…ERGKVRLSMK (69 aa)) folds into the S1 motif domain.

Belongs to the polyribonucleotide nucleotidyltransferase family. The cofactor is Mg(2+).

It is found in the cytoplasm. The catalysed reaction is RNA(n+1) + phosphate = RNA(n) + a ribonucleoside 5'-diphosphate. In terms of biological role, involved in mRNA degradation. Catalyzes the phosphorolysis of single-stranded polyribonucleotides processively in the 3'- to 5'-direction. This Brucella ovis (strain ATCC 25840 / 63/290 / NCTC 10512) protein is Polyribonucleotide nucleotidyltransferase.